The primary structure comprises 121 residues: MWLPVLGLVLGIAIGLMTNLTIPSEYSNYLSLAVLAALDTLIGGIRAHLQGTYDEMVFVSGFFFNIILAISLAFLGVHLGVDLYLAGIFAFGVRLFQNIAVIRRNLLTKWTLSKKNKKNVI.

3 consecutive transmembrane segments (helical) span residues 2–22, 29–49, and 57–77; these read WLPVLGLVLGIAIGLMTNLTI, YLSLAVLAALDTLIGGIRAHL, and VFVSGFFFNIILAISLAFLGV.

The protein belongs to the sbp family.

It is found in the cell membrane. This chain is Small basic protein (sbp), found in Bacillus subtilis (strain 168).